We begin with the raw amino-acid sequence, 860 residues long: Leucine--tRNA ligase (860 aa).

The 'HIGH' region motif lies at 42-52 (PYPSGRLHMGH). The 'KMSKS' region signature appears at 619-623 (KMSKS). K622 lines the ATP pocket.

It belongs to the class-I aminoacyl-tRNA synthetase family.

The protein resides in the cytoplasm. It carries out the reaction tRNA(Leu) + L-leucine + ATP = L-leucyl-tRNA(Leu) + AMP + diphosphate. This is Leucine--tRNA ligase from Escherichia coli (strain 55989 / EAEC).